Here is a 407-residue protein sequence, read N- to C-terminus: Arrestin homolog (407 aa).

It belongs to the arrestin family.

The sequence is that of Arrestin homolog from Locusta migratoria (Migratory locust).